The chain runs to 360 residues: UDP-3-O-acylglucosamine N-acyltransferase (360 aa).

Histidine 256 (proton acceptor) is an active-site residue. Residues 341 to 360 (EGSGAETAARPDDDRDEGRG) are disordered. Positions 349-360 (ARPDDDRDEGRG) are enriched in basic and acidic residues.

Belongs to the transferase hexapeptide repeat family. LpxD subfamily. As to quaternary structure, homotrimer.

The enzyme catalyses a UDP-3-O-[(3R)-3-hydroxyacyl]-alpha-D-glucosamine + a (3R)-hydroxyacyl-[ACP] = a UDP-2-N,3-O-bis[(3R)-3-hydroxyacyl]-alpha-D-glucosamine + holo-[ACP] + H(+). It functions in the pathway bacterial outer membrane biogenesis; LPS lipid A biosynthesis. In terms of biological role, catalyzes the N-acylation of UDP-3-O-acylglucosamine using 3-hydroxyacyl-ACP as the acyl donor. Is involved in the biosynthesis of lipid A, a phosphorylated glycolipid that anchors the lipopolysaccharide to the outer membrane of the cell. In Rhodopseudomonas palustris (strain TIE-1), this protein is UDP-3-O-acylglucosamine N-acyltransferase.